A 270-amino-acid polypeptide reads, in one-letter code: UPF0354 protein BA_4944/GBAA_4944/BAS4588 (270 aa).

It belongs to the UPF0354 family.

This is UPF0354 protein BA_4944/GBAA_4944/BAS4588 from Bacillus anthracis.